The chain runs to 651 residues: NADH oxidase (651 aa).

An FMN-binding site is contributed by Gln104. Tyr175 serves as the catalytic Proton donor. Residues Arg223 and 320 to 321 (GR) contribute to the FMN site. Cys344, Cys347, Cys351, and Cys364 together coordinate [4Fe-4S] cluster. Ala396, Glu415, Gln423, Lys433, and Ala460 together coordinate FAD.

In the N-terminal section; belongs to the NADH:flavin oxidoreductase/NADH oxidase family. As to quaternary structure, homohexamer. The cofactor is FMN. It depends on FAD as a cofactor. [4Fe-4S] cluster is required as a cofactor. Post-translationally, the N-terminus is blocked.

The catalysed reaction is A + NADH + H(+) = AH2 + NAD(+). Functionally, reduces a range of alternative electron acceptors. In Thermoanaerobacter brockii (Thermoanaerobium brockii), this protein is NADH oxidase.